Here is a 352-residue protein sequence, read N- to C-terminus: Divinyl chlorophyll a/b light-harvesting protein PcbH (352 aa).

Helical transmembrane passes span 27 to 47, 88 to 108, 140 to 160, 202 to 222, 242 to 262, and 309 to 329; these read FIGS…ASCL, VATI…AGLA, FILG…VEWA, VMSG…FHIA, AVLS…AFWA, and LVNV…WHAL.

It belongs to the PsbB/PsbC family. IsiA/Pcb subfamily. In terms of assembly, the antenna complex consists of divinyl chlorophylls (a and b) and divinyl chlorophyll a/b binding proteins and binds more divinyl chlorophyll b than does the antenna complex from high-light-adapted Prochlorococcus. Divinyl chlorophyll a is required as a cofactor. Requires divinyl chlorophyll b as cofactor.

It is found in the cellular thylakoid membrane. Its function is as follows. The antenna complex functions as a light receptor, it captures and delivers excitation energy to photosystems II and I. The Prochlorales pcb genes are not related to higher plant LHCs. This chain is Divinyl chlorophyll a/b light-harvesting protein PcbH (pcbH), found in Prochlorococcus marinus (strain SARG / CCMP1375 / SS120).